We begin with the raw amino-acid sequence, 126 residues long: Large ribosomal subunit protein bL17 (126 aa).

The protein belongs to the bacterial ribosomal protein bL17 family. Part of the 50S ribosomal subunit. Contacts protein L32.

This Vibrio atlanticus (strain LGP32) (Vibrio splendidus (strain Mel32)) protein is Large ribosomal subunit protein bL17.